We begin with the raw amino-acid sequence, 300 residues long: Phosphatidylserine decarboxylase proenzyme (300 aa).

Active-site charge relay system; for autoendoproteolytic cleavage activity residues include D113, H169, and S256. Residue S256 is the Schiff-base intermediate with substrate; via pyruvic acid; for decarboxylase activity of the active site. Pyruvic acid (Ser); by autocatalysis is present on S256.

The protein belongs to the phosphatidylserine decarboxylase family. PSD-B subfamily. Prokaryotic type II sub-subfamily. As to quaternary structure, heterodimer of a large membrane-associated beta subunit and a small pyruvoyl-containing alpha subunit. It depends on pyruvate as a cofactor. In terms of processing, is synthesized initially as an inactive proenzyme. Formation of the active enzyme involves a self-maturation process in which the active site pyruvoyl group is generated from an internal serine residue via an autocatalytic post-translational modification. Two non-identical subunits are generated from the proenzyme in this reaction, and the pyruvate is formed at the N-terminus of the alpha chain, which is derived from the carboxyl end of the proenzyme. The autoendoproteolytic cleavage occurs by a canonical serine protease mechanism, in which the side chain hydroxyl group of the serine supplies its oxygen atom to form the C-terminus of the beta chain, while the remainder of the serine residue undergoes an oxidative deamination to produce ammonia and the pyruvoyl prosthetic group on the alpha chain. During this reaction, the Ser that is part of the protease active site of the proenzyme becomes the pyruvoyl prosthetic group, which constitutes an essential element of the active site of the mature decarboxylase.

It localises to the cell membrane. The enzyme catalyses a 1,2-diacyl-sn-glycero-3-phospho-L-serine + H(+) = a 1,2-diacyl-sn-glycero-3-phosphoethanolamine + CO2. It participates in phospholipid metabolism; phosphatidylethanolamine biosynthesis; phosphatidylethanolamine from CDP-diacylglycerol: step 2/2. Its function is as follows. Catalyzes the formation of phosphatidylethanolamine (PtdEtn) from phosphatidylserine (PtdSer). The sequence is that of Phosphatidylserine decarboxylase proenzyme from Ruminiclostridium cellulolyticum (strain ATCC 35319 / DSM 5812 / JCM 6584 / H10) (Clostridium cellulolyticum).